A 575-amino-acid polypeptide reads, in one-letter code: FAD-linked oxidoreductase asqF (575 aa).

The signal sequence occupies residues 1–23 (MALFRLSAAIVVIFLYIWSPSQR). Residues Asn-45 and Asn-80 are each glycosylated (N-linked (GlcNAc...) asparagine). In terms of domain architecture, FAD-binding PCMH-type spans 118–306 (NQGRIPLYAA…VRVTMRTYPD (189 aa)). Pros-8alpha-FAD histidine is present on His-156. N-linked (GlcNAc...) asparagine glycosylation occurs at Asn-370.

This sequence belongs to the oxygen-dependent FAD-linked oxidoreductase family. It depends on FAD as a cofactor.

It carries out the reaction peniprequinolone + A = yaequinolone E + AH2. It functions in the pathway secondary metabolite biosynthesis. The protein operates within alkaloid biosynthesis. It participates in mycotoxin biosynthesis. Its function is as follows. FAD-linked oxidoreductase; part of the gene cluster that mediates the biosynthesis of the aspoquinolone mycotoxins. Within the pathway, asqF performs FAD-dependent dehydrogenation of the dimethylallyl quinolone peniprequinolone to yield the conjugated aryl diene yaequinolone E. The first step of the pathway is catalyzed by the nonribosomal peptide synthetase asqK that condenses anthranilic acid and O-methyl-L-tyrosine to produce 4'-methoxycyclopeptin. 4'-methoxycyclopeptin is then converted to 4'-methoxydehydrocyclopeptin by the ketoglutarate-dependent dioxygenase asqJ. AsqJ also converts its first product 4'-methoxydehydrocyclopeptin to 4'-methoxycyclopenin. The following conversion of 4'-methoxycyclopenin into 4'-methoxyviridicatin is catalyzed by the cyclopenase asqI. 4'-methoxyviridicatin is the precursor of quinolone natural products, and is further converted to quinolinone B. The prenyltransferase asqH1 then catalyzes the canonical Friedel-Crafts alkylation of quinolinone B with dimethylallyl cation to yield dimethylallyl quinolone, which is subjected to FAD-dependent dehydrogenation by the FAD-linked oxidoreductase asqF to yield conjugated aryl diene. The delta(3') double bond then serves as the site of the second alkylation with DMAPP catalyzed by the prenyltransferase asqH2 to yield a carbenium ion intermediate, which can be attacked by H(2)O to yield a styrenyl quinolone containing a C3'-hydroxyprenyl chain. The FAD-dependent monooxygenase asqG performs epoxidation of the terminal C7'-C8' olefin. Finally, after dehydratation of the epoxide at C3 by asqC, the quinolone epoxide rearrangement protein asqO catalyzes an enzymatic 3-exo-tet cyclization to yield the cyclopropyl-THF ring system in aspoquinolone. This is FAD-linked oxidoreductase asqF from Emericella nidulans (strain FGSC A4 / ATCC 38163 / CBS 112.46 / NRRL 194 / M139) (Aspergillus nidulans).